Here is a 227-residue protein sequence, read N- to C-terminus: Flagellar L-ring protein (227 aa).

The signal sequence occupies residues 1–15; that stretch reads MRTWAVLPILLMLVG. The N-palmitoyl cysteine moiety is linked to residue cysteine 16. The S-diacylglycerol cysteine moiety is linked to residue cysteine 16.

The protein belongs to the FlgH family. In terms of assembly, the basal body constitutes a major portion of the flagellar organelle and consists of four rings (L,P,S, and M) mounted on a central rod.

It localises to the cell outer membrane. Its subcellular location is the bacterial flagellum basal body. In terms of biological role, assembles around the rod to form the L-ring and probably protects the motor/basal body from shearing forces during rotation. This chain is Flagellar L-ring protein, found in Syntrophotalea carbinolica (strain DSM 2380 / NBRC 103641 / GraBd1) (Pelobacter carbinolicus).